We begin with the raw amino-acid sequence, 151 residues long: Putative pre-16S rRNA nuclease (151 aa).

This sequence belongs to the YqgF nuclease family.

Its subcellular location is the cytoplasm. Functionally, could be a nuclease involved in processing of the 5'-end of pre-16S rRNA. This is Putative pre-16S rRNA nuclease from Prochlorococcus marinus (strain MIT 9515).